Consider the following 236-residue polypeptide: MKKKYWNIKLEDMLEARVHLGHSTQNWNPKMAPYISAKRKGIHIINLTRTARFLSEACDLVFYAASKGKKFLIVGTNNAADEAVARASKRARCHYVNKKWLGGMLTNWSTTETRLQKFRDLRMEQKKGGLNNLPKKEATMLKRKLARLQKYLGGIQYMTGLPDIVIIIDQHKEYTALQECRTLGIPTISLIDTNCDPNLSDIAIPANDDAMASIRFILNKLVFAICQGYFSQLRKP.

Belongs to the universal ribosomal protein uS2 family.

It is found in the plastid. The polypeptide is Small ribosomal subunit protein uS2c (rps2) (Cuscuta obtusiflora (Peruvian dodder)).